We begin with the raw amino-acid sequence, 708 residues long: Metabotropic glutamate receptor-like protein L (708 aa).

An N-terminal signal peptide occupies residues 1–24 (MKLIIKNLILLLVSCLYFLSNVSC). 4 N-linked (GlcNAc...) asparagine glycosylation sites follow: N21, N235, N310, and N366. The Extracellular segment spans residues 25-370 (DQEVHMALLL…TTGSINKTFM (346 aa)). The chain crosses the membrane as a helical span at residues 371-391 (AVSILEMAICLIIGIIVIFFF). Over 392-401 (SRNINIIYST) the chain is Cytoplasmic. A helical transmembrane segment spans residues 402-422 (IPYCLTILLGASLIAVAIFLW). Over 423–435 (NLRDLNTQICTSK) the chain is Extracellular. Residues 436 to 456 (IWMASLGYNVLIGFIIIKSSL) traverse the membrane as a helical segment. Over 457–479 (IYFKFKEMVKSKNEKISPIPFGR) the chain is Cytoplasmic. The helical transmembrane segment at 480–500 (IVLWFVPLLIIDCVLLIIYST) threads the bilayer. Topologically, residues 501–531 (SGNPGKIDSLGLDGIGRYEYTQNCVNNLTGD) are extracellular. Residue N527 is glycosylated (N-linked (GlcNAc...) asparagine). A helical transmembrane segment spans residues 532–552 (IILYIILVFHGLQLLYGCVIA). Topologically, residues 553-568 (WKTRVIDLEEFIEAHD) are cytoplasmic. Residues 569-589 (FATAIYLITFCSFIIVILMVG) traverse the membrane as a helical segment. Residues 590 to 597 (VTSTSNRN) lie on the Extracellular side of the membrane. Residues 598-618 (TIISACAIFSSFSCVLIIFGA) traverse the membrane as a helical segment. The Cytoplasmic segment spans residues 619 to 708 (KFWKIYKPVE…SSRAAAQNDN (90 aa)). The tract at residues 638–681 (KPQKSYSGSGGSGNSSGSKSKKTSAHSSTSGVKSGTSAPTQTSQ) is disordered. Positions 669-681 (VKSGTSAPTQTSQ) are enriched in polar residues.

This sequence in the N-terminal section; belongs to the BMP lipoprotein family. In the C-terminal section; belongs to the G-protein coupled receptor 3 family. GABA-B receptor subfamily.

Its subcellular location is the membrane. This is Metabotropic glutamate receptor-like protein L (far1) from Dictyostelium discoideum (Social amoeba).